Reading from the N-terminus, the 378-residue chain is Metacaspase-1B (378 aa).

Residues Met-1 to Ala-70 are disordered. Residues Gln-10–Gly-29 show a composition bias toward low complexity. Catalysis depends on residues His-169 and Cys-225.

Belongs to the peptidase C14B family.

In terms of biological role, involved in cell death (apoptosis). This Aspergillus terreus (strain NIH 2624 / FGSC A1156) protein is Metacaspase-1B (casB).